A 324-amino-acid chain; its full sequence is Holliday junction branch migration complex subunit RuvB (324 aa).

The segment at Met-1–Tyr-168 is large ATPase domain (RuvB-L). ATP is bound by residues Leu-6, Arg-7, Gly-48, Lys-51, Thr-52, Thr-53, Glu-115–Phe-117, Arg-158, Tyr-168, and Arg-205. Residue Thr-52 coordinates Mg(2+). Residues Thr-169 to Gly-239 form a small ATPAse domain (RuvB-S) region. The head domain (RuvB-H) stretch occupies residues Glu-242–Pro-324. Residues Arg-297 and Arg-302 each contribute to the DNA site.

This sequence belongs to the RuvB family. In terms of assembly, homohexamer. Forms an RuvA(8)-RuvB(12)-Holliday junction (HJ) complex. HJ DNA is sandwiched between 2 RuvA tetramers; dsDNA enters through RuvA and exits via RuvB. An RuvB hexamer assembles on each DNA strand where it exits the tetramer. Each RuvB hexamer is contacted by two RuvA subunits (via domain III) on 2 adjacent RuvB subunits; this complex drives branch migration. In the full resolvosome a probable DNA-RuvA(4)-RuvB(12)-RuvC(2) complex forms which resolves the HJ.

Its subcellular location is the cytoplasm. It carries out the reaction ATP + H2O = ADP + phosphate + H(+). Its activity is regulated as follows. The ATPase activity of RuvB is enhanced by RuvA. Functionally, the RuvA-RuvB-RuvC complex processes Holliday junction (HJ) DNA during genetic recombination and DNA repair, while the RuvA-RuvB complex plays an important role in the rescue of blocked DNA replication forks via replication fork reversal (RFR). RuvA specifically binds to HJ cruciform DNA, conferring on it an open structure. The RuvB hexamer acts as an ATP-dependent pump, pulling dsDNA into and through the RuvAB complex. RuvB forms 2 homohexamers on either side of HJ DNA bound by 1 or 2 RuvA tetramers; 4 subunits per hexamer contact DNA at a time. Coordinated motions by a converter formed by DNA-disengaged RuvB subunits stimulates ATP hydrolysis and nucleotide exchange. Immobilization of the converter enables RuvB to convert the ATP-contained energy into a lever motion, pulling 2 nucleotides of DNA out of the RuvA tetramer per ATP hydrolyzed, thus driving DNA branch migration. The RuvB motors rotate together with the DNA substrate, which together with the progressing nucleotide cycle form the mechanistic basis for DNA recombination by continuous HJ branch migration. Branch migration allows RuvC to scan DNA until it finds its consensus sequence, where it cleaves and resolves cruciform DNA. Its function is as follows. Has Mg(2+)-, DNA-dependent ATPase activity; dsDNA and supercoiled DNA but not ssDNA stimulate activity. Binds to linear dsDNA in the absence of ATP or ATP-gamma-S. This subunit can promote Holliday junction migration alone in vitro. Partially complements an E.coli deletion for UV sensitivity. This Thermus thermophilus protein is Holliday junction branch migration complex subunit RuvB.